A 243-amino-acid polypeptide reads, in one-letter code: Ribonuclease PH (243 aa).

Residues Arg91 and 129-131 contribute to the phosphate site; that span reads GTR.

The protein belongs to the RNase PH family. In terms of assembly, homohexameric ring arranged as a trimer of dimers.

The enzyme catalyses tRNA(n+1) + phosphate = tRNA(n) + a ribonucleoside 5'-diphosphate. Phosphorolytic 3'-5' exoribonuclease that plays an important role in tRNA 3'-end maturation. Removes nucleotide residues following the 3'-CCA terminus of tRNAs; can also add nucleotides to the ends of RNA molecules by using nucleoside diphosphates as substrates, but this may not be physiologically important. Probably plays a role in initiation of 16S rRNA degradation (leading to ribosome degradation) during starvation. This is Ribonuclease PH from Burkholderia mallei (strain NCTC 10247).